Consider the following 262-residue polypeptide: Putative hydro-lyase Cbei_2760 (262 aa).

This sequence belongs to the D-glutamate cyclase family.

In Clostridium beijerinckii (strain ATCC 51743 / NCIMB 8052) (Clostridium acetobutylicum), this protein is Putative hydro-lyase Cbei_2760.